The sequence spans 422 residues: L-threonine dehydratase biosynthetic IlvA (422 aa).

Lys56 is modified (N6-(pyridoxal phosphate)lysine). Pyridoxal 5'-phosphate is bound by residues Asn83, Gly189–Leu193, and Ser315. Residues His339–Glu413 form the ACT-like domain.

The protein belongs to the serine/threonine dehydratase family. In terms of assembly, homotetramer. The cofactor is pyridoxal 5'-phosphate.

The catalysed reaction is L-threonine = 2-oxobutanoate + NH4(+). The protein operates within amino-acid biosynthesis; L-isoleucine biosynthesis; 2-oxobutanoate from L-threonine: step 1/1. Catalyzes the anaerobic formation of alpha-ketobutyrate and ammonia from threonine in a two-step reaction. The first step involved a dehydration of threonine and a production of enamine intermediates (aminocrotonate), which tautomerizes to its imine form (iminobutyrate). Both intermediates are unstable and short-lived. The second step is the nonenzymatic hydrolysis of the enamine/imine intermediates to form 2-ketobutyrate and free ammonia. In the low water environment of the cell, the second step is accelerated by RidA. In Staphylococcus aureus (strain NCTC 8325 / PS 47), this protein is L-threonine dehydratase biosynthetic IlvA (ilvA).